A 110-amino-acid polypeptide reads, in one-letter code: V-type proton ATPase subunit F (110 aa).

The protein belongs to the V-ATPase F subunit family. In terms of assembly, V-ATPase is a heteromultimeric enzyme made up of two complexes: the ATP-hydrolytic V1 complex and the proton translocation V0 complex. The V1 complex consists of three catalytic AB heterodimers that form a heterohexamer, three peripheral stalks each consisting of EG heterodimers, one central rotor including subunits D and F, and the regulatory subunits C and H. The proton translocation complex V0 consists of the proton transport subunit a, a ring of proteolipid subunits c9c'', rotary subunit d, subunits e and f, and two accessory subunits.

Subunit of the V1 complex of vacuolar(H+)-ATPase (V-ATPase), a multisubunit enzyme composed of a peripheral complex (V1) that hydrolyzes ATP and a membrane integral complex (V0) that translocates protons. V-ATPase is responsible for acidifying and maintaining the pH of intracellular compartments and in some cell types, is targeted to the plasma membrane, where it is responsible for acidifying the extracellular environment. This Xenopus laevis (African clawed frog) protein is V-type proton ATPase subunit F (atp6s14).